Reading from the N-terminus, the 178-residue chain is Large ribosomal subunit protein bL25 (178 aa).

It belongs to the bacterial ribosomal protein bL25 family. CTC subfamily. Part of the 50S ribosomal subunit; part of the 5S rRNA/L5/L18/L25 subcomplex. Contacts the 5S rRNA. Binds to the 5S rRNA independently of L5 and L18.

This is one of the proteins that binds to the 5S RNA in the ribosome where it forms part of the central protuberance. The sequence is that of Large ribosomal subunit protein bL25 from Helicobacter pylori (strain G27).